The primary structure comprises 258 residues: Mediator of RNA polymerase II transcription subunit 4 (258 aa).

The stretch at 52 to 101 (FRKMLELAEEQAKVEEAMDQLRAKVEVHDREIQKLQKSLKDAELILSTAI) forms a coiled coil. Disordered stretches follow at residues 164–208 (GKSE…EVPN) and 234–258 (LETR…SDSQ). A compositionally biased stretch (polar residues) spans 166–190 (SEQNINGGTVTHQNSGMPSEQQRTL). Residues 194-204 (AGSGSGSGAGG) are compositionally biased toward gly residues. A compositionally biased stretch (low complexity) spans 246–258 (STDSSSSSSSDSQ).

It belongs to the Mediator complex subunit 4 family. In terms of assembly, component of the Mediator complex, which includes at least MED4, MED6, MED14, MED17, MED18, MED20, MED21, MED23, MED24, MED27, MED30 and MED31. Interacts with MED10 and MED21.

The protein resides in the nucleus. Its function is as follows. Component of the Mediator complex, a coactivator involved in the regulated transcription of nearly all RNA polymerase II-dependent genes. Mediator functions as a bridge to convey information from gene-specific regulatory proteins to the basal RNA polymerase II transcription machinery. Mediator is recruited to promoters by direct interactions with regulatory proteins and serves as a scaffold for the assembly of a functional preinitiation complex with RNA polymerase II and the general transcription factors. Required for activated transcription of the MtnA, MtnB and MtnD genes. The protein is Mediator of RNA polymerase II transcription subunit 4 (MED4) of Drosophila melanogaster (Fruit fly).